Reading from the N-terminus, the 509-residue chain is 2-isopropylmalate synthase (509 aa).

One can recognise a Pyruvate carboxyltransferase domain in the interval Ile-5–Lys-267. Residues Asp-14, His-202, His-204, and Asn-238 each coordinate Mn(2+). The tract at residues Lys-391 to Asn-509 is regulatory domain.

It belongs to the alpha-IPM synthase/homocitrate synthase family. LeuA type 1 subfamily. In terms of assembly, homodimer. Mn(2+) serves as cofactor.

Its subcellular location is the cytoplasm. The enzyme catalyses 3-methyl-2-oxobutanoate + acetyl-CoA + H2O = (2S)-2-isopropylmalate + CoA + H(+). It participates in amino-acid biosynthesis; L-leucine biosynthesis; L-leucine from 3-methyl-2-oxobutanoate: step 1/4. Catalyzes the condensation of the acetyl group of acetyl-CoA with 3-methyl-2-oxobutanoate (2-ketoisovalerate) to form 3-carboxy-3-hydroxy-4-methylpentanoate (2-isopropylmalate). This is 2-isopropylmalate synthase from Staphylococcus aureus (strain bovine RF122 / ET3-1).